The following is a 313-amino-acid chain: Protease HtpX homolog (313 aa).

2 helical membrane passes run 7–24 (AMLL…GYLI) and 29–46 (GMMI…FSYW). H130 lines the Zn(2+) pocket. E131 is a catalytic residue. H134 contacts Zn(2+). The next 2 membrane-spanning stretches (helical) occupy residues 145–165 (ITAT…FFGG) and 172–192 (PFGF…AMVV). A Zn(2+)-binding site is contributed by E201. The tract at residues 282–313 (GNAPPASLREDEPGADGPWGRSASRARKGPWS) is disordered.

The protein belongs to the peptidase M48B family. Zn(2+) is required as a cofactor.

The protein resides in the cell inner membrane. This Chelativorans sp. (strain BNC1) protein is Protease HtpX homolog.